Reading from the N-terminus, the 412-residue chain is Multifunctional CCA protein (412 aa).

Residues glycine 8 and arginine 11 each coordinate ATP. CTP is bound by residues glycine 8 and arginine 11. Residues aspartate 21 and aspartate 23 each coordinate Mg(2+). ATP is bound by residues arginine 91, arginine 137, and arginine 140. CTP is bound by residues arginine 91, arginine 137, and arginine 140. Residues 228–329 (TGIHTLMTLS…VKLFDSIDAW (102 aa)) form the HD domain.

This sequence belongs to the tRNA nucleotidyltransferase/poly(A) polymerase family. Bacterial CCA-adding enzyme type 1 subfamily. Monomer. Can also form homodimers and oligomers. It depends on Mg(2+) as a cofactor. The cofactor is Ni(2+).

It catalyses the reaction a tRNA precursor + 2 CTP + ATP = a tRNA with a 3' CCA end + 3 diphosphate. It carries out the reaction a tRNA with a 3' CCA end + 2 CTP + ATP = a tRNA with a 3' CCACCA end + 3 diphosphate. Functionally, catalyzes the addition and repair of the essential 3'-terminal CCA sequence in tRNAs without using a nucleic acid template. Adds these three nucleotides in the order of C, C, and A to the tRNA nucleotide-73, using CTP and ATP as substrates and producing inorganic pyrophosphate. tRNA 3'-terminal CCA addition is required both for tRNA processing and repair. Also involved in tRNA surveillance by mediating tandem CCA addition to generate a CCACCA at the 3' terminus of unstable tRNAs. While stable tRNAs receive only 3'-terminal CCA, unstable tRNAs are marked with CCACCA and rapidly degraded. This chain is Multifunctional CCA protein, found in Escherichia coli O127:H6 (strain E2348/69 / EPEC).